Consider the following 305-residue polypeptide: Succinate--CoA ligase [ADP-forming] subunit alpha (305 aa).

Residues 17–20, K43, and 96–98 each bind CoA; these read TGKE and ITE. Position 161 (Y161) interacts with substrate. The active-site Tele-phosphohistidine intermediate is the H249.

This sequence belongs to the succinate/malate CoA ligase alpha subunit family. Heterotetramer of two alpha and two beta subunits.

It catalyses the reaction succinate + ATP + CoA = succinyl-CoA + ADP + phosphate. The enzyme catalyses GTP + succinate + CoA = succinyl-CoA + GDP + phosphate. The protein operates within carbohydrate metabolism; tricarboxylic acid cycle; succinate from succinyl-CoA (ligase route): step 1/1. Functionally, succinyl-CoA synthetase functions in the citric acid cycle (TCA), coupling the hydrolysis of succinyl-CoA to the synthesis of either ATP or GTP and thus represents the only step of substrate-level phosphorylation in the TCA. The alpha subunit of the enzyme binds the substrates coenzyme A and phosphate, while succinate binding and nucleotide specificity is provided by the beta subunit. The polypeptide is Succinate--CoA ligase [ADP-forming] subunit alpha (Aquifex aeolicus (strain VF5)).